Reading from the N-terminus, the 274-residue chain is Long chain fatty acid elongase 6 (274 aa).

Residues M1–Q30 are Extracellular-facing. The chain crosses the membrane as a helical span at residues Y31–M51. Residues T52–G69 lie on the Cytoplasmic side of the membrane. The helical transmembrane segment at L70–F90 threads the bilayer. Residues S91 to M111 lie on the Extracellular side of the membrane. Residues F112–L132 form a helical membrane-spanning segment. Over R133–K135 the chain is Cytoplasmic. Residues P136–F156 form a helical membrane-spanning segment. Residues E157 to N159 are Extracellular-facing. Residues L160 to Y180 traverse the membrane as a helical segment. Residues Y181–Q202 are Cytoplasmic-facing. The chain crosses the membrane as a helical span at residues I203 to G223. At Q224–P230 the chain is on the extracellular side. The chain crosses the membrane as a helical span at residues G231 to Y251. The Cytoplasmic portion of the chain corresponds to Y252–E274.

The protein belongs to the ELO family. As to expression, expressed in the gut, neurons, pharynx and muscles of the vulva.

It localises to the membrane. It carries out the reaction isopentadecanoyl-CoA + malonyl-CoA + H(+) = 3-oxoisoheptadecanoyl-CoA + CO2 + CoA. Its pathway is lipid metabolism; fatty acid biosynthesis. Catalyzes the first and rate-limiting reaction of the four reactions that constitute the long-chain fatty acids elongation cycle. Uses malonyl-CoA to add 2 carbons per cycle to the chain of long-chain fatty acids. Condensing enzyme required for the formation of isoheptadecanoate (C17iso), which plays critical roles in animal development and growth. In Caenorhabditis elegans, this protein is Long chain fatty acid elongase 6 (elo-6).